A 201-amino-acid chain; its full sequence is MDLISVILISIGLSMDAFAVSITNGAMISKVTASEGIRIGLFFGGFQALMPLIGWSIGIKFESYIAALDHWIALILLSIIGGKMIYDSVKENQDHKDEIACDYAVGEKKCLNNKTLILLAIATSIDALAVGVSFAFLKVSIINTIVIIGSITFVICFIGVMIGKKCGKLLKKRAEILGGVVLILIGVKIFIQHTNILSYIF.

6 helical membrane-spanning segments follow: residues 3–23 (LISVILISIGLSMDAFAVSIT), 39–59 (IGLFFGGFQALMPLIGWSIGI), 65–85 (IAALDHWIALILLSIIGGKMI), 116–136 (LILLAIATSIDALAVGVSFAF), 141–161 (IINTIVIIGSITFVICFIGVM), and 176–196 (ILGGVVLILIGVKIFIQHTNI).

The protein belongs to the MntP (TC 9.B.29) family.

The protein localises to the cell membrane. Probably functions as a manganese efflux pump. In Clostridium botulinum (strain Langeland / NCTC 10281 / Type F), this protein is Putative manganese efflux pump MntP 2.